The following is a 334-amino-acid chain: MIVIPRYTIIKEKASGRIPEILDNLNLKNPLVITGKNTKKYNKDFDFIYYDEIETSDLENIKNYAKDYDSIIGIGGGRPIDIGKLIAHKSKKPFLSVPTTASNDGIASPIVSLTQPSYMTEAPIAIIADIDIIKKSPKKLLSAGMGDIVSNITAVLDWELGKIEKSEKYSDSSGIFSKTIAIELMDYVLNSNLEEYPKKLVKALIGSGISIAIAHSSRPASGSEHLFSHALDTMKEKYDIDTTSLHGEQCGVGTLAIAQIYLEEGKLEVETFEMLKNSLKAVDAPVTAEQLGFDEEIIIEALSSANTLRKRHTILRNGISKEKAREILEKSEII.

Residues 77 to 81 (GRPID) and 99 to 102 (TTAS) each bind NAD(+). Position 104 (Asp-104) interacts with substrate. Ser-108 contacts NAD(+). Residue Asp-147 participates in substrate binding. Residues Asp-147 and His-225 each coordinate Zn(2+). A substrate-binding site is contributed by His-229. Zn(2+) is bound at residue His-246.

This sequence belongs to the glycerol-1-phosphate dehydrogenase family. Zn(2+) is required as a cofactor.

The protein localises to the cytoplasm. It carries out the reaction sn-glycerol 1-phosphate + NAD(+) = dihydroxyacetone phosphate + NADH + H(+). The enzyme catalyses sn-glycerol 1-phosphate + NADP(+) = dihydroxyacetone phosphate + NADPH + H(+). Its pathway is membrane lipid metabolism; glycerophospholipid metabolism. Its function is as follows. Catalyzes the NAD(P)H-dependent reduction of dihydroxyacetonephosphate (DHAP or glycerone phosphate) to glycerol 1-phosphate (G1P). The G1P thus generated is used as the glycerophosphate backbone of phospholipids in the cellular membranes of Archaea. The sequence is that of Glycerol-1-phosphate dehydrogenase [NAD(P)+] from Methanococcus maripaludis (strain C6 / ATCC BAA-1332).